A 189-amino-acid polypeptide reads, in one-letter code: MAVYSTNEFKNGLKVMVDDAPCSILDCEFVKPGKGQAFTRIKIRNLKTGRVVERTFKSGDTLPSADVADVEMQYLYNDGEYWHFMVPDTFEQYAVTENVLADAAQWLKEQDVCVLTLWNNEPIQVTPPNFVILAITETDPGLKGDTSGGGGKPATLETGAVVRVPLFVQTGELIKVDTRKGEYVSRAKE.

Residue Lys-34 is modified to N6-(3,6-diaminohexanoyl)-5-hydroxylysine.

The protein belongs to the elongation factor P family. May be beta-lysylated on the epsilon-amino group of Lys-34 by the combined action of EpmA and EpmB, and then hydroxylated on the C5 position of the same residue by EpmC (if this protein is present). Lysylation is critical for the stimulatory effect of EF-P on peptide-bond formation. The lysylation moiety may extend toward the peptidyltransferase center and stabilize the terminal 3-CCA end of the tRNA. Hydroxylation of the C5 position on Lys-34 may allow additional potential stabilizing hydrogen-bond interactions with the P-tRNA.

The protein resides in the cytoplasm. It participates in protein biosynthesis; polypeptide chain elongation. Functionally, involved in peptide bond synthesis. Alleviates ribosome stalling that occurs when 3 or more consecutive Pro residues or the sequence PPG is present in a protein, possibly by augmenting the peptidyl transferase activity of the ribosome. Modification of Lys-34 is required for alleviation. The polypeptide is Elongation factor P (Legionella pneumophila (strain Paris)).